The primary structure comprises 283 residues: Myeloid differentiation primary response protein MyD88-A (283 aa).

The Death domain occupies Arg27 to Ile105. Residues Glu106–Gly143 are intermediate domain. Positions Glu147–Leu281 constitute a TIR domain.

It is found in the cytoplasm. Adapter protein involved in the Toll-like receptor and IL-1 receptor signaling pathway in the innate immune response. Activates expression of target genes in the Spemann organizer region during early embryonic development. Is required for normal axis formation. The chain is Myeloid differentiation primary response protein MyD88-A (myd88-a) from Xenopus laevis (African clawed frog).